A 32-amino-acid chain; its full sequence is Protamine-3A (32 aa).

The interval 1–32 (PRRRRRSSSRPIRRRRRPRVSRRRRRGGRRRR) is disordered.

Testis.

It is found in the nucleus. The protein localises to the chromosome. Functionally, protamines substitute for histones in the chromatin of sperm during the haploid phase of spermatogenesis. They compact sperm DNA into a highly condensed, stable and inactive complex. The sequence is that of Protamine-3A from Oncorhynchus mykiss (Rainbow trout).